A 125-amino-acid polypeptide reads, in one-letter code: Protein Bouncer (125 aa).

The N-terminal stretch at Met1–Pro18 is a signal peptide. Cystine bridges form between Cys23/Cys48, Cys26/Cys35, Cys42/Cys66, Cys72/Cys91, and Cys92/Cys97. Positions Cys23–Asn98 constitute a UPAR/Ly6 domain. An N-linked (GlcNAc...) asparagine glycan is attached at Asn32. N-linked (GlcNAc...) asparagine glycosylation is present at Asn84. Asn98 is lipidated: GPI-anchor amidated asparagine. Positions Ser99–Leu125 are cleaved as a propeptide — removed in mature form.

Belongs to the SPACA4/bouncer family. Interacts with spermatocyte complex composed of izumo1, spaca6 and tmem81. N-glycosylated. As to expression, highly expressed in oocytes. Not expressed in testis.

It localises to the cell membrane. Its function is as follows. Oocyte-expressed fertilization factor that mediates sperm-egg binding and is essential for sperm entry into the egg. Necessary and sufficient to mediate species-specific gamete recognition and fertilization, which is essential for vertebrate species performing external fertilization. External fertilization cannot guarantee that only conspecific sperm reaches the egg by precopulatory mate choice: proteins such as Bouncer can therefore support the selection of conspecific sperm. The protein is Protein Bouncer of Danio rerio (Zebrafish).